The chain runs to 157 residues: Transcriptional repressor NrdR (157 aa).

Positions 1–21 are disordered; that stretch reads MRCPYCGSEDSQVKDSRPAED. A zinc finger spans residues 3-34; it reads CPYCGSEDSQVKDSRPAEDGNAIRRRRICPDC. A compositionally biased stretch (basic and acidic residues) spans 11–21; sequence SQVKDSRPAED. The ATP-cone domain maps to 49–139; that stretch reads LMIIKKTGRK…VYRDFSHAED (91 aa).

This sequence belongs to the NrdR family. Zn(2+) is required as a cofactor.

In terms of biological role, negatively regulates transcription of bacterial ribonucleotide reductase nrd genes and operons by binding to NrdR-boxes. The protein is Transcriptional repressor NrdR of Sinorhizobium medicae (strain WSM419) (Ensifer medicae).